A 620-amino-acid chain; its full sequence is MALLQISEPGESPAPHQRKLAVGIDLGTTNSLVAAVRSSTPEVLRDAEGQALLPSAVRYCADGKVVIGRQALAQQAADPFNTVVSVKRFMGRSLDEARASGAPYEFVDAPGMVRLRTAQGELSPVEVSAQILAVLRQRAEDVLGDDLVGAVITVPAYFDDAQRQATRDAARLAGLNVLRLLNEPTAAAIAYGLDQAAEGTYAVYDLGGGTFDVSILRLTKGVFEVVATGGDTALGGDDFDWSISEFARASLGDAPLAPADRRTVLVAARAAREALSQASEAPLRATLQDGRQLNLTLTQAQFEQLAEPLVRRTLDRARSALRDAGLAVGDINGVVMVGGATRMPVVRRAVGELFGTEPLVDLDPDQVVALGAALQANLLAGNRLPGEDWLLLDVIPLSLGLETMGGLVERIIPRNSTIPVARAQEFTTFKDGQGAMSVHVVQGERELVSDCRSLARFELRGIPPMVAGAARIRVTFQVDADGLLSVTAREQSTGVEAAVSVKPSYGLSDDEITRMLADSVAQADSDARARMLREQQVEARQLVESVRAALAADGDLLDADERRVVDERLQAAAAAQDADDADAVRAAVQALSAATEDFAARRMDRGIRAALAGRKLDEIA.

It belongs to the heat shock protein 70 family.

Functionally, chaperone involved in the maturation of iron-sulfur cluster-containing proteins. Has a low intrinsic ATPase activity which is markedly stimulated by HscB. The polypeptide is Chaperone protein HscA homolog (Bordetella petrii (strain ATCC BAA-461 / DSM 12804 / CCUG 43448)).